Reading from the N-terminus, the 451-residue chain is MSETENKTTTETPTTTDSTVTTKEVKVPKATSKGNDDYFFVKNVKNQLSNTRTRATVDRLAPTPPLSQAAKRKLIDTKERKEKKEKKEKEPKEPKEPKEKAKKKAKTEKKKDDGDEEEDEEKEEDEEQKEEQSQEEDSEESEEEQNSDEDKKKKKKQAKKVAKKETEPKKKEAKPKKEAKPKKETTKKEKEATTTSSDSTEKKEKEEKPKKEKKISKKDQAAAEKKKDGDDSTTTTATATTTTDDSTENKEEKKDKKTTKKPAAAEKKKVKKDGDDDETAAAATEEKKDEEKSEEKEKKETKKPAAPKKPAAAEKKKTAANPTDKKDGENKDVTPSDDKPAATTTTTTAAAATTTEEPKEKITKPAADKKKAPANKKAEKDQSSSDESANKETTTATTTTTNKDATAPTTTTNKDATAPTTTTTKDNVDEASVKKTANSAPKKEAAKNKSK.

The tract at residues 1 to 451 (MSETENKTTT…KKEAAKNKSK (451 aa)) is disordered. Positions 9-22 (TTETPTTTDSTVTT) are enriched in low complexity. Positions 44–54 (VKNQLSNTRTR) are enriched in polar residues. Over residues 73–99 (KLIDTKERKEKKEKKEKEPKEPKEPKE) the composition is skewed to basic and acidic residues. A compositionally biased stretch (acidic residues) spans 114 to 147 (GDEEEDEEKEEDEEQKEEQSQEEDSEESEEEQNS). Residues 152 to 162 (KKKKKQAKKVA) are compositionally biased toward basic residues. Basic and acidic residues-rich tracts occupy residues 163-192 (KKET…EKEA), 199-210 (STEKKEKEEKPK), and 217-230 (KKDQ…KDGD). Residues 232–244 (STTTTATATTTTD) show a composition bias toward low complexity. Basic and acidic residues-rich tracts occupy residues 284 to 303 (TEEK…ETKK) and 311 to 340 (AAAE…DDKP). The span at 341–355 (AATTTTTTAAAATTT) shows a compositional bias: low complexity. Over residues 356 to 383 (EEPKEKITKPAADKKKAPANKKAEKDQS) the composition is skewed to basic and acidic residues. Residues 393-425 (TTTATTTTTNKDATAPTTTTNKDATAPTTTTTK) show a composition bias toward low complexity. Residues 441-451 (PKKEAAKNKSK) show a composition bias toward basic and acidic residues.

This is an uncharacterized protein from Dictyostelium discoideum (Social amoeba).